Reading from the N-terminus, the 319-residue chain is Beta-ketoacyl-[acyl-carrier-protein] synthase III (319 aa).

Catalysis depends on residues C113 and H246. The tract at residues 247–251 is ACP-binding; that stretch reads QANIR. The active site involves N276.

Belongs to the thiolase-like superfamily. FabH family. In terms of assembly, homodimer.

The protein resides in the cytoplasm. It catalyses the reaction malonyl-[ACP] + acetyl-CoA + H(+) = 3-oxobutanoyl-[ACP] + CO2 + CoA. The protein operates within lipid metabolism; fatty acid biosynthesis. Catalyzes the condensation reaction of fatty acid synthesis by the addition to an acyl acceptor of two carbons from malonyl-ACP. Catalyzes the first condensation reaction which initiates fatty acid synthesis and may therefore play a role in governing the total rate of fatty acid production. Possesses both acetoacetyl-ACP synthase and acetyl transacylase activities. Its substrate specificity determines the biosynthesis of branched-chain and/or straight-chain of fatty acids. This Ehrlichia canis (strain Jake) protein is Beta-ketoacyl-[acyl-carrier-protein] synthase III.